The chain runs to 410 residues: Metacaspase-1B (410 aa).

A disordered region spans residues 1–106; the sequence is MYHRNSAPPP…SFGKGAPSNY (106 aa). Pro residues-rich tracts occupy residues 7-23 and 32-52; these read APPP…PQSQ and PPYP…PPPT. Active-site residues include H201 and C257.

It belongs to the peptidase C14B family.

In terms of biological role, involved in cell death (apoptosis). The sequence is that of Metacaspase-1B (casB) from Aspergillus clavatus (strain ATCC 1007 / CBS 513.65 / DSM 816 / NCTC 3887 / NRRL 1 / QM 1276 / 107).